We begin with the raw amino-acid sequence, 276 residues long: C-type lectin domain family 12 member B (276 aa).

Over 1 to 43 the chain is Cytoplasmic; that stretch reads MSEDMTYATLTFQDSVAAGNNQDRNNLRKRGYPAPSSIWRQAA. Positions 5–10 match the ITIM motif motif; the sequence is MTYATL. Position 7 is a phosphotyrosine (Tyr-7). Residues 44 to 64 form a helical; Signal-anchor for type II membrane protein membrane-spanning segment; it reads LGLLTLCVMLLIGLVTLGIMF. Residues 65-276 lie on the Extracellular side of the membrane; it reads LQMSSEINSD…AALVKIEDLD (212 aa). N-linked (GlcNAc...) asparagine glycans are attached at residues Asn-91, Asn-176, and Asn-237. Residues 150–264 enclose the C-type lectin domain; it reads YQTSCYYFAV…CSAEISWICE (115 aa). 2 disulfides stabilise this stretch: Cys-172/Cys-263 and Cys-242/Cys-255.

As to quaternary structure, homodimer. Interacts (via ITIM motif) with PTPN6. Interacts (via ITIM motif) with PTPN11; this interaction triggers dephosphorylation and activation of PTPN11.

It is found in the cell membrane. Inhibitory receptor postulated to negatively regulate immune and non-immune functions. Upon phosphorylation, recruits SH2 domain-containing PTPN6 and PTPN11 phosphatases to its ITIM motif and antagonizes activation signals. Although it inhibits KLRK1/NKG2D-mediated signaling, it does not bind known ligands of KLRK1/NKG2D and therefore is not its inhibitory counterpart. May limit activation of myeloid cell subsets in response to infection or tissue inflammation. May protect target cells against natural killer cell-mediated lysis. May negatively regulate cell cycle and differentiation of melanocytes via inactivation of STAT3. The protein is C-type lectin domain family 12 member B (CLEC12B) of Bos taurus (Bovine).